We begin with the raw amino-acid sequence, 150 residues long: Ribonuclease K6 (150 aa).

The signal sequence occupies residues 1–23; it reads MVLCFPLLLLLLVLWGPVCLLHA. The active-site Proton acceptor is H38. 4 disulfide bridges follow: C46-C104, C60-C114, C78-C129, and C85-C92. N55 is a glycosylation site (N-linked (GlcNAc...) asparagine). Substrate contacts are provided by residues 61-65 and K86; that span reads KHQNT. The N-linked (GlcNAc...) asparagine glycan is linked to N100. A substrate-binding site is contributed by R105. The Proton donor role is filled by H145.

The protein belongs to the pancreatic ribonuclease family. As to quaternary structure, interacts (via N-terminus) with bacterial lipopolysaccharide (LPS).

It is found in the secreted. Its subcellular location is the lysosome. The protein localises to the cytoplasmic granule. Functionally, ribonuclease which shows a preference for the pyrimidines uridine and cytosine. Has potent antibacterial activity against a range of Gram-positive and Gram-negative bacteria, including P.aeruginosa, A.baumanii, M.luteus, S.aureus, E.faecalis, E.faecium, S.saprophyticus and E.coli. Causes loss of bacterial membrane integrity, and also promotes agglutination of Gram-negative bacteria. Probably contributes to urinary tract sterility. Bactericidal activity is independent of RNase activity. This chain is Ribonuclease K6 (RNASE6), found in Miopithecus talapoin (Angolan talapoin).